The primary structure comprises 442 residues: MELQKKFTALAQSQVELEVVVAREDAQRHYQRFVEEYLERARLPGFRKGKVPLAVLERKYGSAIRQDAAAALMEKALEEGFAQASQDSQPLPISRPSLKKKPVFDPDEDFSFAVIYDVFPSVELRNTSGFSLSVPTVSVTEEDVSRELTRIQERNALVTDKGADSCAEVGDIATVDYHEVDDSGAVRPGTERAGVVFTLGVEEGPFALGQDILGMKLGQRCLFAKRAGMLKDEAAQVRVTLKALKQRQLPSLDDELAQDVSDAFRTLDDLTRSVRQNLAEALEAALHEYKRRQLLRILVRENPFSLPESLVVGEMESRWALVMRQFGVSLSGTPQNKLQFFQQWRPEVEEHLKQRVIVELLLKQEQVSVSAEEIETEYVRIASKTGSKEERVREYYAGEEKRRALCEGIRERKLCQKLLGRCVTECGPEQSLTDFLQEQSRA.

The PPIase FKBP-type domain maps to 170–250; it reads GDIATVDYHE…LKALKQRQLP (81 aa).

The protein belongs to the FKBP-type PPIase family. Tig subfamily.

It localises to the cytoplasm. It catalyses the reaction [protein]-peptidylproline (omega=180) = [protein]-peptidylproline (omega=0). In terms of biological role, involved in protein export. Acts as a chaperone by maintaining the newly synthesized protein in an open conformation. Functions as a peptidyl-prolyl cis-trans isomerase. In Treponema pallidum (strain Nichols), this protein is Trigger factor (tig).